Here is a 561-residue protein sequence, read N- to C-terminus: Putative transport protein YbjL (561 aa).

5 helical membrane passes run 8 to 28 (LLNG…LCLG), 32 to 52 (LGSV…LLGQ), 66 to 86 (FMLF…SIFF), 94 to 114 (MLAL…GKLF), and 158 to 178 (NLSL…IVGA). RCK C-terminal domains lie at 200-288 (RGLD…SFRN) and 292-373 (VFDR…RIGF). The next 5 helical transmembrane spans lie at 383–403 (LLAF…TFQF), 406–426 (FSFG…LGFL), 447–467 (FGLM…ISNG), 475–495 (MLIA…LFGA), and 540–560 (AIAN…WPGL).

This sequence belongs to the AAE transporter (TC 2.A.81) family. YbjL subfamily.

Its subcellular location is the cell membrane. The protein is Putative transport protein YbjL of Salmonella dublin (strain CT_02021853).